We begin with the raw amino-acid sequence, 592 residues long: Arginine--tRNA ligase (592 aa).

Positions 131–141 (ANPTGPMHVGH) match the 'HIGH' region motif.

It belongs to the class-I aminoacyl-tRNA synthetase family. As to quaternary structure, monomer.

The protein resides in the cytoplasm. It carries out the reaction tRNA(Arg) + L-arginine + ATP = L-arginyl-tRNA(Arg) + AMP + diphosphate. The polypeptide is Arginine--tRNA ligase (Rhodospirillum rubrum (strain ATCC 11170 / ATH 1.1.1 / DSM 467 / LMG 4362 / NCIMB 8255 / S1)).